A 588-amino-acid polypeptide reads, in one-letter code: Serine/threonine-protein phosphatase 2A 65 kDa regulatory subunit A alpha isoform (588 aa).

HEAT repeat units lie at residues 2-42 (AMVD…ALGE), 44-80 (RTRKELIPFLSENSDDDDEVLLAMAEELGVFIPFVGG), 81-119 (IEFAHVLLPPLESLCTVEETCVREKAVESLCKIGSQMKE), 158-196 (DVLKTELRATYSQLCKDDMPMVRRAAASNLGKFATTVES), 197-235 (TFLIAEIMTMFDDLTKDDQDSVRLLAVEGCAALGKLLEP), 236-274 (QDCVARILPVIVNFSQDKSWRVRYMVANQLYELCEAVGP), 275-313 (DCTRTDLVPAYVRLLRDNEAEVRIAAAGKVTKFCRLLNP), 315-352 (LAIQHILPCVKELSSDSSQHVRSALASVIMGMAPILGK), 353-391 (DSTIEHLLPIFLSLLKDEFPDVRLNIISKLDQVNQVIGI), 393-430 (LLSQSLLPAIVELAEDRHWRVRLAIIEYVPLLASQLGI), 432-469 (FFDDKLGALCMQWLQDKVYSIREAAANNLKRLAEEFGP), 470-508 (EWAMQHLVPQVLDMVNNPHYLHRMMVLRAISLMAPVMGS), 509-547 (EITCSKFLPVVVEASKDRVPNIKFNVAKLLQSLIPIVDQ), and 549-586 (VVDKTIRQCLVDLSEDPDVDVRYFANQALNSIDGSTAA).

This sequence belongs to the phosphatase 2A regulatory subunit A family. In terms of assembly, PP2A consists of a common heterodimeric core enzyme, composed of a 36 kDa catalytic subunit (subunit C) and a 65 kDa constant regulatory subunit (subunit A), that associates with a variety of regulatory subunits such as subunits B (the R2/B/PR55/B55, R3/B''/PR72/PR130/PR59 and R5/B'/B56 families) and the regulatory subunits TON2. Interacts with CYP20-1/ROC7. Also interacts with phosphatidic acid (PA), a lipid signaling molecule. Interacts with CHIP. Interacts with SIC/RON3. Ubiquitinated. CHIP-mediated ubiquitination enhances phosphatase activity after an abiotic stress such as low temperature or darkness. As to expression, mostly expressed in cell-dividing tissues such as apical meristems. Ubiquitous, with higher levels in roots and flowers (at protein level).

The protein resides in the cytoplasm. The protein localises to the cytosol. It is found in the nucleus. The A subunit of protein phosphatase 2A serves as a scaffolding molecule to coordinate the assembly of the catalytic subunit and a variable regulatory B subunit. Seems to act as a positive regulator of PP2A catalytic activity. Confers resistance to phosphatase inhibitors such as okadaic acid and cantharidin. Involved during developmental process such as seedling and floral developments, root gravitropism, and stomatal opening regulation. Involved in the regulation of auxin efflux, especially during basipetal (tips to base) auxin transport in roots, and appears to contribute to the perception of auxin efflux inhibitors such as 1-N-naphthylphthalamic acid (NPA) and to semicarbazone I (substituted phenylsemicarbazone of 2-acetylarylcarboxylic acids) (SCB-I). Modulates the magnitude of ethylene response in the hypocotyl and stem, and functions as a general positive transducer of early ABA signaling. The holoenzyme composed of PP2AA1, PP2A4 and B'ZETA or B'ETA acts as a negative regulator of plant innate immunity by controlling BAK1 phosphorylation state and activation in surface-localized immune receptor complexes. The polypeptide is Serine/threonine-protein phosphatase 2A 65 kDa regulatory subunit A alpha isoform (PP2AA1) (Arabidopsis thaliana (Mouse-ear cress)).